The following is a 395-amino-acid chain: Guanine nucleotide-binding protein subunit beta-5b (395 aa).

7 WD repeats span residues 103–142 (GHGNKVLCMDWCRDKRRIVSSSQDGKVIVWDAYTTNKEHA), 145–184 (MPCTWVMACAYAPSGCAVACGGLDNKCSVYPLSLDKNENL), 193–234 (MHTN…QSFH), 235–276 (GHSA…NVQS), 279–318 (THDSDINSVKYYPSGDAFASGSDDATCRLYDLRADREVAI), 320–362 (SKDS…RVAI), and 365–395 (GHENRVSTVRVSPDGTAFCSGSWDNTLRIWA).

It belongs to the WD repeat G protein beta family. In terms of assembly, may interact with RGS9; this interaction stabilizes both proteins and increases RGS9 GTPase-activating protein (GAP) activity, hence accelerating the deactivation of D(2) dopamine receptor-mediated signaling.

It is found in the membrane. Enhances GTPase-activating protein (GAP) activity of regulator of G protein signaling (RGS) proteins, such as RGS7 and RGS9, hence involved in the termination of the signaling initiated by the G protein coupled receptors (GPCRs) by accelerating the GTP hydrolysis on the G-alpha subunits, thereby promoting their inactivation. Increases RGS7 GTPase-activating protein (GAP) activity, thereby regulating mood and cognition. Increases RGS9 GTPase-activating protein (GAP) activity, hence contributes to the deactivation of G protein signaling initiated by D(2) dopamine receptors. Along with gnb5a, plays an important role in neuronal signaling, including in the parasympathetic, but not sympathetic, control of heart rate. The sequence is that of Guanine nucleotide-binding protein subunit beta-5b from Danio rerio (Zebrafish).